We begin with the raw amino-acid sequence, 342 residues long: S-adenosylmethionine:tRNA ribosyltransferase-isomerase (342 aa).

This sequence belongs to the QueA family. As to quaternary structure, monomer.

It localises to the cytoplasm. It catalyses the reaction 7-aminomethyl-7-carbaguanosine(34) in tRNA + S-adenosyl-L-methionine = epoxyqueuosine(34) in tRNA + adenine + L-methionine + 2 H(+). Its pathway is tRNA modification; tRNA-queuosine biosynthesis. Its function is as follows. Transfers and isomerizes the ribose moiety from AdoMet to the 7-aminomethyl group of 7-deazaguanine (preQ1-tRNA) to give epoxyqueuosine (oQ-tRNA). In Streptococcus pneumoniae (strain Hungary19A-6), this protein is S-adenosylmethionine:tRNA ribosyltransferase-isomerase.